A 242-amino-acid polypeptide reads, in one-letter code: Biosynthetic peptidoglycan transglycosylase (242 aa).

The helical transmembrane segment at 15–35 (FLLLLMVVLAVFWGGGIALFS) threads the bilayer.

It belongs to the glycosyltransferase 51 family.

The protein localises to the cell inner membrane. It carries out the reaction [GlcNAc-(1-&gt;4)-Mur2Ac(oyl-L-Ala-gamma-D-Glu-L-Lys-D-Ala-D-Ala)](n)-di-trans,octa-cis-undecaprenyl diphosphate + beta-D-GlcNAc-(1-&gt;4)-Mur2Ac(oyl-L-Ala-gamma-D-Glu-L-Lys-D-Ala-D-Ala)-di-trans,octa-cis-undecaprenyl diphosphate = [GlcNAc-(1-&gt;4)-Mur2Ac(oyl-L-Ala-gamma-D-Glu-L-Lys-D-Ala-D-Ala)](n+1)-di-trans,octa-cis-undecaprenyl diphosphate + di-trans,octa-cis-undecaprenyl diphosphate + H(+). Its pathway is cell wall biogenesis; peptidoglycan biosynthesis. Its function is as follows. Peptidoglycan polymerase that catalyzes glycan chain elongation from lipid-linked precursors. This is Biosynthetic peptidoglycan transglycosylase from Shigella sonnei (strain Ss046).